Consider the following 134-residue polypeptide: Phosphoribosyl-AMP cyclohydrolase (134 aa).

Residue Asp-80 coordinates Mg(2+). Cys-81 contributes to the Zn(2+) binding site. Asp-82 and Asp-84 together coordinate Mg(2+). Cys-98 and Cys-105 together coordinate Zn(2+).

The protein belongs to the PRA-CH family. As to quaternary structure, homodimer. The cofactor is Mg(2+). Zn(2+) is required as a cofactor.

The protein resides in the cytoplasm. The catalysed reaction is 1-(5-phospho-beta-D-ribosyl)-5'-AMP + H2O = 1-(5-phospho-beta-D-ribosyl)-5-[(5-phospho-beta-D-ribosylamino)methylideneamino]imidazole-4-carboxamide. Its pathway is amino-acid biosynthesis; L-histidine biosynthesis; L-histidine from 5-phospho-alpha-D-ribose 1-diphosphate: step 3/9. Functionally, catalyzes the hydrolysis of the adenine ring of phosphoribosyl-AMP. The protein is Phosphoribosyl-AMP cyclohydrolase of Herminiimonas arsenicoxydans.